Here is a 269-residue protein sequence, read N- to C-terminus: Phosphate import ATP-binding protein PstB 2 (269 aa).

In terms of domain architecture, ABC transporter spans 23–264; the sequence is LEVKDLSIYY…PKKQKTEDYI (242 aa). Residue 55-62 coordinates ATP; it reads GPSGCGKS.

It belongs to the ABC transporter superfamily. Phosphate importer (TC 3.A.1.7) family. In terms of assembly, the complex is composed of two ATP-binding proteins (PstB), two transmembrane proteins (PstC and PstA) and a solute-binding protein (PstS).

It is found in the cell membrane. It carries out the reaction phosphate(out) + ATP + H2O = ADP + 2 phosphate(in) + H(+). Its function is as follows. Part of the ABC transporter complex PstSACB involved in phosphate import. Responsible for energy coupling to the transport system. The chain is Phosphate import ATP-binding protein PstB 2 from Bacillus subtilis (strain 168).